The primary structure comprises 283 residues: 5'-nucleotidase SurE (283 aa).

A divalent metal cation contacts are provided by aspartate 14, aspartate 15, serine 47, and asparagine 105.

The protein belongs to the SurE nucleotidase family. The cofactor is a divalent metal cation.

Its subcellular location is the cytoplasm. The catalysed reaction is a ribonucleoside 5'-phosphate + H2O = a ribonucleoside + phosphate. Nucleotidase that shows phosphatase activity on nucleoside 5'-monophosphates. The sequence is that of 5'-nucleotidase SurE from Chlamydia trachomatis serovar L2 (strain ATCC VR-902B / DSM 19102 / 434/Bu).